Here is a 438-residue protein sequence, read N- to C-terminus: Glycerophosphocholine cholinephosphodiesterase ENPP6 (438 aa).

Residues methionine 1–alanine 22 form the signal peptide. Aspartate 32, serine 69, and asparagine 90 together coordinate substrate. Residues aspartate 32 and serine 69 each coordinate Zn(2+). Serine 69 functions as the Nucleophile in the catalytic mechanism. Position 69 is a phosphoserine (serine 69). A disulfide bond links cysteine 140 and cysteine 152. The stretch at lysine 162–asparagine 226 forms a coiled coil. N-linked (GlcNAc...) asparagine glycosylation is present at asparagine 163. Aspartate 191 provides a ligand contact to substrate. Zn(2+) contacts are provided by aspartate 191, histidine 195, aspartate 238, and histidine 239. Substrate is bound at residue histidine 239. Asparagine 258, asparagine 287, and asparagine 339 each carry an N-linked (GlcNAc...) asparagine glycan. Histidine 352 provides a ligand contact to substrate. Histidine 352 contributes to the Zn(2+) binding site. N-linked (GlcNAc...) asparagine glycosylation occurs at asparagine 402. Residue serine 415 is the site of GPI-anchor amidated serine attachment. Residues alanine 416–cysteine 438 constitute a propeptide, removed in mature form.

The protein belongs to the nucleotide pyrophosphatase/phosphodiesterase family. Zn(2+) is required as a cofactor.

Its subcellular location is the cell membrane. The catalysed reaction is sn-glycerol 3-phosphocholine + H2O = phosphocholine + glycerol + H(+). It catalyses the reaction a 1-acyl-sn-glycero-3-phosphocholine + H2O = a 1-acyl-sn-glycerol + phosphocholine + H(+). It carries out the reaction a 1-O-alkyl-sn-glycero-3-phosphocholine + H2O = a 1-O-alkyl-sn-glycerol + phosphocholine + H(+). The enzyme catalyses 1-dodecanoyl-sn-glycero-3-phosphocholine + H2O = 1-dodecanoyl-sn-glycerol + phosphocholine + H(+). The catalysed reaction is 1-hexadecanoyl-sn-glycero-3-phosphocholine + H2O = 1-hexadecanoyl-sn-glycerol + phosphocholine + H(+). It catalyses the reaction 1-(5Z,8Z,11Z,14Z-eicosatetraenoyl)-sn-glycero-3-phosphocholine + H2O = 1-(5Z,8Z,11Z,14Z-eicosatetraenoyl)-sn-glycerol + phosphocholine + H(+). It carries out the reaction 1-tetradecanoyl-sn-glycero-3-phosphocholine + H2O = 1-tetradecanoyl-sn-glycerol + phosphocholine + H(+). The enzyme catalyses sphing-4-enine-phosphocholine + H2O = sphing-4-enine + phosphocholine + H(+). The catalysed reaction is 1-(9Z-octadecenoyl)-sn-glycero-3-phosphocholine + H2O = 1-(9Z-octadecenoyl)-sn-glycerol + phosphocholine + H(+). It catalyses the reaction 1-(9Z,12Z)-octadecadienoyl-sn-glycero-3-phosphocholine + H2O = 1-(9Z,12Z-octadecadienoyl)-sn-glycerol + phosphocholine + H(+). It carries out the reaction glycero-2-phosphocholine + H2O = phosphocholine + glycerol + H(+). Its function is as follows. Choline-specific glycerophosphodiesterase that hydrolyzes glycerophosphocholine (GPC) and lysophosphatidylcholine (LPC) and contributes to supplying choline to the cells. Has a preference for LPC with short (12:0 and 14:0) or polyunsaturated (18:2 and 20:4) fatty acids. In vitro, hydrolyzes only choline-containing lysophospholipids, such as sphingosylphosphorylcholine (SPC), platelet-activating factor (PAF) and lysoPAF, but not other lysophospholipids. This Danio rerio (Zebrafish) protein is Glycerophosphocholine cholinephosphodiesterase ENPP6.